The chain runs to 60 residues: Large ribosomal subunit protein bL32 (60 aa).

Residues 1–23 are compositionally biased toward basic residues; the sequence is MAKHPVPKKKTSKARRDARRSHH. The segment at 1 to 28 is disordered; sequence MAKHPVPKKKTSKARRDARRSHHALTPP.

This sequence belongs to the bacterial ribosomal protein bL32 family. As to quaternary structure, part of the 50S ribosomal subunit.

In terms of biological role, found on the solvent side of the large subunit. In Thermus thermophilus (strain ATCC BAA-163 / DSM 7039 / HB27), this protein is Large ribosomal subunit protein bL32 (rpmF).